We begin with the raw amino-acid sequence, 284 residues long: MDKIQNGWFSEISEFWPGNSFSLEVEKVLHHEKSEYQDFLVFKSKSFGNVLVLDGVIQATERDEFAYQEMITHIPLFSHPSPKRVLVVGGGDGGVLREVVKHPLVESVTLCEIDKGVIEASRNFLPNMRVGFDHPKVTLFIGDGMEFMRQRKGEFDVIITDSSDPIGPAQGLFERAYYELLKAALAPGGIVCSQCESMWLHLDTIKGLTTFCKELYPNVEYAYTSIPSYPGGSIGFILCSLGGSTKAPIREITPEVQSQMQYYNGEVHKASFVLPQFAAKKLNL.

One can recognise a PABS domain in the interval Asn-6–Leu-241. S-adenosyl 3-(methylsulfanyl)propylamine is bound at residue Gln-37. Tyr-67 is a putrescine binding site. S-adenosyl 3-(methylsulfanyl)propylamine is bound by residues Gln-68, Asp-92, Glu-112, Asp-143–Gly-144, and Asp-161. Asp-161 serves as the catalytic Proton acceptor. Putrescine is bound by residues Asp-161 to Asp-164 and Tyr-229.

This sequence belongs to the spermidine/spermine synthase family.

The catalysed reaction is S-adenosyl 3-(methylsulfanyl)propylamine + putrescine = S-methyl-5'-thioadenosine + spermidine + H(+). Its pathway is amine and polyamine biosynthesis; spermidine biosynthesis; spermidine from putrescine: step 1/1. Catalyzes the production of spermidine from putrescine and decarboxylated S-adenosylmethionine (dcSAM). Has a strong preference for putrescine as substrate. This Dictyostelium discoideum (Social amoeba) protein is Spermidine synthase (spsA).